The following is a 342-amino-acid chain: uncharacterized protein (342 aa).

This sequence belongs to the bacterial luciferase oxidoreductase family.

This is an uncharacterized protein from Sinorhizobium fredii (strain NBRC 101917 / NGR234).